The sequence spans 97 residues: Probable gamma-secretase subunit PEN-2 (97 aa).

Residues 1-20 (MLIPEDDKLDDEKMINIAKK) lie on the Cytoplasmic side of the membrane. The segment at residues 21 to 39 (LWFIGFFFLPWVWLINILY) is an intramembrane region (helical). Residues 40–55 (FIPYRNSLNDKVKWYL) are Cytoplasmic-facing. A helical membrane pass occupies residues 56-76 (KFSLIGFLGYSTIFMGWMGIY). The Lumenal segment spans residues 77–97 (LVNRNKWGAFGDDISITIPFG).

It belongs to the PEN-2 family. In terms of assembly, the functional gamma-secretase complex is composed of at least four polypeptides: a presenilin homodimer, nicastrin, aph1 and psenen.

It is found in the endoplasmic reticulum membrane. The protein resides in the golgi apparatus. It localises to the golgi stack membrane. The protein localises to the cell membrane. Its subcellular location is the membrane. Its function is as follows. Essential subunit of the gamma-secretase complex, an endoprotease complex that catalyzes the intramembrane cleavage of integral membrane proteins such as Notch receptors. The gamma-secretase complex plays a role in Notch and Wnt signaling cascades and regulation of downstream processes via its role in processing key regulatory proteins. This is Probable gamma-secretase subunit PEN-2 (psenen) from Dictyostelium discoideum (Social amoeba).